The primary structure comprises 453 residues: tRNA modification GTPase MnmE (453 aa).

3 residues coordinate (6S)-5-formyl-5,6,7,8-tetrahydrofolate: arginine 22, glutamate 79, and lysine 119. The TrmE-type G domain occupies 215–376 (GMKVVIAGRP…LKQHLKSLMG (162 aa)). Position 225 (asparagine 225) interacts with K(+). GTP is bound by residues 225 to 230 (NAGKSS), 244 to 250 (TEIAGTT), 269 to 272 (DTAG), and 334 to 337 (NKAD). Mg(2+) is bound at residue serine 229. 3 residues coordinate K(+): threonine 244, isoleucine 246, and threonine 249. Threonine 250 contributes to the Mg(2+) binding site. (6S)-5-formyl-5,6,7,8-tetrahydrofolate is bound at residue lysine 453.

The protein belongs to the TRAFAC class TrmE-Era-EngA-EngB-Septin-like GTPase superfamily. TrmE GTPase family. Homodimer. Heterotetramer of two MnmE and two MnmG subunits. K(+) serves as cofactor.

It is found in the cytoplasm. Exhibits a very high intrinsic GTPase hydrolysis rate. Involved in the addition of a carboxymethylaminomethyl (cmnm) group at the wobble position (U34) of certain tRNAs, forming tRNA-cmnm(5)s(2)U34. The protein is tRNA modification GTPase MnmE of Shewanella pealeana (strain ATCC 700345 / ANG-SQ1).